The chain runs to 290 residues: MASLKEMRNRIGSVKATQKITKAMQMVAAAKLRKAQDAAQNARPYAQRMASVIANLAAGVSGDGAPKLLAGTGSDRRHLVVVATSDRGLAGGFNSAIVRAARERINALSAEGKDVRVITIGRKARDQLRRLAGERLVATYEAGSNPSLAVAEEVSARIQEMFEAGEVDVVHLVFSSFKSVVTQQPTVRQLIPAEVAAGQAPLDLKGATYEYEPDEEQILETLLPRNVTTQLLSATLENQAGFYAAQMTAMDNATRNAGDMIASLTLQYNRSRQAQITKELIEIISGAEAL.

This sequence belongs to the ATPase gamma chain family. As to quaternary structure, F-type ATPases have 2 components, CF(1) - the catalytic core - and CF(0) - the membrane proton channel. CF(1) has five subunits: alpha(3), beta(3), gamma(1), delta(1), epsilon(1). CF(0) has three main subunits: a, b and c.

The protein resides in the cell inner membrane. Functionally, produces ATP from ADP in the presence of a proton gradient across the membrane. The gamma chain is believed to be important in regulating ATPase activity and the flow of protons through the CF(0) complex. The protein is ATP synthase gamma chain of Phenylobacterium zucineum (strain HLK1).